Reading from the N-terminus, the 524-residue chain is MSQNSSSLLETWRQVVADLTTLSQQADSGFDPLTPTQRAYLNLTKPIAIVDGYAVLSTPNAMAKNVIENDLGDALTRVLSLRMGRSFSLAVSVEPEQEIPETPAQQEFKYQPDAPVISSNKAPKQYEVGGRGGASTSDGWERTHSAPAPEPHPAPIADPEPELATPQRIPRETPAHNPNREVSLNPKYTFESFVIGPFNRFANAAAVAVAESPAKAFNPLFISGGSGLGKTHLLHAVGNYAQELQPGLRIKYVSSEEFTNDYINSVRDDRQETFKRRYRNLDILMVDDIQFLAGKEGTQEEFFHTFNALHQADKQIILSSDRPPKQLTTLEDRLRTRFEGGLITDIQPPDLETRIAILMKKAQTDGTHVDREVLELIASRFESSIRELEGALIRVSAYSSLINQPIDKEMAIVALRDILPEPEDMEITAPVIMEVTAEYFEISVDTLRGAGKTRAVAHARQLAMYLCRELTDMSLPKIGDVFGGKDHTTVMYADRKIRQEMTEKRDTYDEIQQLTQLIKSRGRN.

Residues 1–105 form a domain I, interacts with DnaA modulators region; that stretch reads MSQNSSSLLE…EQEIPETPAQ (105 aa). Residues 95-183 form a disordered region; that stretch reads PEQEIPETPA…PAHNPNREVS (89 aa). A domain II region spans residues 106-182; that stretch reads QEFKYQPDAP…TPAHNPNREV (77 aa). Residues 148-158 are compositionally biased toward pro residues; it reads APEPHPAPIAD. Residues 183 to 399 form a domain III, AAA+ region region; the sequence is SLNPKYTFES…GALIRVSAYS (217 aa). Residues Gly-227, Gly-229, Lys-230, and Thr-231 each contribute to the ATP site. Residues 400 to 524 are domain IV, binds dsDNA; the sequence is SLINQPIDKE…TQLIKSRGRN (125 aa).

It belongs to the DnaA family. As to quaternary structure, oligomerizes as a right-handed, spiral filament on DNA at oriC.

It localises to the cytoplasm. Functionally, plays an essential role in the initiation and regulation of chromosomal replication. ATP-DnaA binds to the origin of replication (oriC) to initiate formation of the DNA replication initiation complex once per cell cycle. Binds the DnaA box (a 9 base pair repeat at the origin) and separates the double-stranded (ds)DNA. Forms a right-handed helical filament on oriC DNA; dsDNA binds to the exterior of the filament while single-stranded (ss)DNA is stabiized in the filament's interior. The ATP-DnaA-oriC complex binds and stabilizes one strand of the AT-rich DNA unwinding element (DUE), permitting loading of DNA polymerase. After initiation quickly degrades to an ADP-DnaA complex that is not apt for DNA replication. Binds acidic phospholipids. This chain is Chromosomal replication initiator protein DnaA, found in Corynebacterium glutamicum (strain R).